Here is a 409-residue protein sequence, read N- to C-terminus: Type II methyltransferase M.BsuFI (409 aa).

Residues 101-402 enclose the SAM-dependent MTase C5-type domain; the sequence is LTFIDLFAGI…GAMKERLLLA (302 aa). Cys170 is a catalytic residue.

The protein belongs to the class I-like SAM-binding methyltransferase superfamily. C5-methyltransferase family.

The enzyme catalyses a 2'-deoxycytidine in DNA + S-adenosyl-L-methionine = a 5-methyl-2'-deoxycytidine in DNA + S-adenosyl-L-homocysteine + H(+). Its function is as follows. A methylase, recognizes the double-stranded sequence 5'-CCGG-3', methylates C-1 on both strands, and protects the DNA from cleavage by the BsuFI endonuclease. In Bacillus subtilis, this protein is Type II methyltransferase M.BsuFI (hsdFM).